The chain runs to 396 residues: Phosphoglycerate kinase (396 aa).

Substrate contacts are provided by residues 21–23, Arg36, 59–62, Arg118, and Arg151; these read DFN and HFDR. ATP-binding positions include Lys201, Glu323, and 353 to 356; that span reads GGDT.

It belongs to the phosphoglycerate kinase family. As to quaternary structure, monomer.

The protein localises to the cytoplasm. It carries out the reaction (2R)-3-phosphoglycerate + ATP = (2R)-3-phospho-glyceroyl phosphate + ADP. The protein operates within carbohydrate degradation; glycolysis; pyruvate from D-glyceraldehyde 3-phosphate: step 2/5. This Caulobacter sp. (strain K31) protein is Phosphoglycerate kinase.